A 97-amino-acid polypeptide reads, in one-letter code: Large ribosomal subunit protein bL28 (97 aa).

Belongs to the bacterial ribosomal protein bL28 family.

This Rhizorhabdus wittichii (strain DSM 6014 / CCUG 31198 / JCM 15750 / NBRC 105917 / EY 4224 / RW1) (Sphingomonas wittichii) protein is Large ribosomal subunit protein bL28.